Reading from the N-terminus, the 701-residue chain is Polyribonucleotide nucleotidyltransferase (701 aa).

2 residues coordinate Mg(2+): Asp-485 and Asp-491. Residues 552–611 (PKIFKTTVDPEKIRDIIGPGGKMINKIIAETNVKIDIEPDGRIFVAAPDDISGNRAISMI) enclose the KH domain. Residues 621 to 689 (GQFFLGKVTR…KLGRLSLSRK (69 aa)) form the S1 motif domain.

Belongs to the polyribonucleotide nucleotidyltransferase family. The cofactor is Mg(2+).

The protein resides in the cytoplasm. It carries out the reaction RNA(n+1) + phosphate = RNA(n) + a ribonucleoside 5'-diphosphate. Involved in mRNA degradation. Catalyzes the phosphorolysis of single-stranded polyribonucleotides processively in the 3'- to 5'-direction. In Caldicellulosiruptor bescii (strain ATCC BAA-1888 / DSM 6725 / KCTC 15123 / Z-1320) (Anaerocellum thermophilum), this protein is Polyribonucleotide nucleotidyltransferase.